Here is a 123-residue protein sequence, read N- to C-terminus: Large ribosomal subunit protein uL24 (123 aa).

The protein belongs to the universal ribosomal protein uL24 family. In terms of assembly, part of the 50S ribosomal subunit.

One of two assembly initiator proteins, it binds directly to the 5'-end of the 23S rRNA, where it nucleates assembly of the 50S subunit. In terms of biological role, one of the proteins that surrounds the polypeptide exit tunnel on the outside of the subunit. The chain is Large ribosomal subunit protein uL24 from Kineococcus radiotolerans (strain ATCC BAA-149 / DSM 14245 / SRS30216).